Consider the following 473-residue polypeptide: Photosystem II CP43 reaction center protein (473 aa).

Positions 1–14 (MKTLYSLRRFYHVE) are excised as a propeptide. Thr-15 carries the post-translational modification N-acetylthreonine. Thr-15 bears the Phosphothreonine mark. 5 helical membrane-spanning segments follow: residues 69 to 93 (LFEVAHFVPEKPMYEQGLILLPHLA), 134 to 155 (LLGPETLEESFPFFGYVWKDRN), 178 to 200 (KALYFGGIYDTWAPGGGDVRKIT), 255 to 275 (KPFAWARRALVWSGEAYLSYS), and 291 to 312 (WFNNTAYPSEFYGPTGPEASQA). Glu-367 is a [CaMn4O5] cluster binding site. The helical transmembrane segment at 447–471 (RARAAAAGFEKGIDRDFEPVLSMTP) threads the bilayer.

The protein belongs to the PsbB/PsbC family. PsbC subfamily. As to quaternary structure, PSII is composed of 1 copy each of membrane proteins PsbA, PsbB, PsbC, PsbD, PsbE, PsbF, PsbH, PsbI, PsbJ, PsbK, PsbL, PsbM, PsbT, PsbX, PsbY, PsbZ, Psb30/Ycf12, at least 3 peripheral proteins of the oxygen-evolving complex and a large number of cofactors. It forms dimeric complexes. The cofactor is Binds multiple chlorophylls and provides some of the ligands for the Ca-4Mn-5O cluster of the oxygen-evolving complex. It may also provide a ligand for a Cl- that is required for oxygen evolution. PSII binds additional chlorophylls, carotenoids and specific lipids..

Its subcellular location is the plastid. The protein resides in the chloroplast thylakoid membrane. Its function is as follows. One of the components of the core complex of photosystem II (PSII). It binds chlorophyll and helps catalyze the primary light-induced photochemical processes of PSII. PSII is a light-driven water:plastoquinone oxidoreductase, using light energy to abstract electrons from H(2)O, generating O(2) and a proton gradient subsequently used for ATP formation. In Glycine max (Soybean), this protein is Photosystem II CP43 reaction center protein.